The primary structure comprises 77 residues: U10-lycotoxin-Ls1d (77 aa).

Residues 1-20 (MKLIIFTGLFLFAIVSLIEA) form the signal peptide. Residues 21–26 (EEESGR) constitute a propeptide that is removed on maturation.

This sequence belongs to the neurotoxin 19 (CSTX) family. 09 (U10-Lctx) subfamily. Contains 4 disulfide bonds. As to expression, expressed by the venom gland.

The protein localises to the secreted. This Lycosa singoriensis (Wolf spider) protein is U10-lycotoxin-Ls1d.